A 363-amino-acid polypeptide reads, in one-letter code: Galanin receptor 2a (363 aa).

Topologically, residues 1 to 23 are extracellular; the sequence is MNASQQIHVFSSHWKVESVIISL. Residues 24–44 traverse the membrane as a helical segment; that stretch reads IFSMIFLVGTVGNCLVLAVLI. The Cytoplasmic portion of the chain corresponds to 45–54; that stretch reads RNGQMNTKST. Residues 55-75 traverse the membrane as a helical segment; the sequence is NLFILNLGLADLCFIVFCVPL. The Extracellular portion of the chain corresponds to 76 to 94; the sequence is QATIYTMDEWVFGAFVCKA. C92 and C169 are joined by a disulfide. Residues 95 to 115 traverse the membrane as a helical segment; the sequence is VHFIIYLTMYASIFTLAAVSL. Residues 116–135 are Cytoplasmic-facing; the sequence is DRYLAIRYPLRSRETRTPRN. Residues 136–156 traverse the membrane as a helical segment; that stretch reads ALTSISLVWALSLFFSSPYLS. Residues 157-179 are Extracellular-facing; sequence YYQQMDLDGTTVCIPAWSVHHRQ. A helical transmembrane segment spans residues 180–200; sequence AMDICTFIFGYLIPVLILGIT. Residues 201–230 are Cytoplasmic-facing; that stretch reads YARTIRYLWTSVDPMQDMSESRKAKRKVTK. Residues 231–251 form a helical membrane-spanning segment; it reads MIIIVAVLFCLCWLPHHLVIL. Residues 252 to 268 are Extracellular-facing; sequence CMWFGHFPLNHTTYVLR. Residues 269-289 traverse the membrane as a helical segment; the sequence is ILSHLVAYANSCLNPIVYALV. The Cytoplasmic segment spans residues 290–363; the sequence is SKHFRKGFKK…TSAFMTFNVT (74 aa).

Belongs to the G-protein coupled receptor 1 family. In terms of tissue distribution, expressed in neurons in the ventral area of the interpeduncular nucleus (IPN) where expression often overlaps with spx1.

The protein localises to the membrane. Functionally, receptor for the hormone galanin. Receptor for the hormones spexin-1 and spexin-2. This Danio rerio (Zebrafish) protein is Galanin receptor 2a.